An 810-amino-acid polypeptide reads, in one-letter code: RING finger protein unkempt homolog (810 aa).

The tract at residues 1–24 (MSKGPGPGGSAASSAPPAATAQVL) is disordered. The span at 10–19 (SAASSAPPAA) shows a compositional bias: low complexity. 5 C3H1-type zinc fingers span residues 84 to 113 (YSPDVYCTKYDEATGLCPEGDECPFLHRTT), 124 to 154 (YYKTGICIHETDSKGNCTKNGLHCAFAHGPH), 215 to 241 (NYKTEPCKKPPRLCRQGYACPYYHNSK), 251 to 285 (KYRSSPCPNVKHGDEWGDPGKCENGDACQYCHTRT), and 293 to 321 (IYKSTKCNDMQQSGSCPRGPFCAFAHVEQ). Positions 239 to 265 (NSKDRRRSPRKHKYRSSPCPNVKHGDE) are disordered. At Ser-240 the chain carries Phosphoserine. Residues 241-253 (KDRRRSPRKHKYR) show a composition bias toward basic residues. Residues 324 to 343 (LSDDLQPSSAVSSPTQPGPV) form a disordered region. Polar residues predominate over residues 328 to 338 (LQPSSAVSSPT). Phosphoserine occurs at positions 374, 378, 385, and 631. The stretch at 643–723 (GAAELARLRQ…QEELERLHAG (81 aa)) forms a coiled coil. Residues 766–801 (SVKCLKCQEQKRAVLPCQHAALCELCAEGSECPICQ) form an RING-type; degenerate zinc finger.

This sequence belongs to the unkempt family.

It is found in the cytoplasm. In terms of biological role, sequence-specific RNA-binding protein which plays an important role in the establishment and maintenance of the early morphology of cortical neurons during embryonic development. Acts as a translation repressor and controls a translationally regulated cell morphology program to ensure proper structuring of the nervous system. Translational control depends on recognition of its binding element within target mRNAs which consists of a mandatory UAG trimer upstream of a U/A-rich motif. Associated with polysomes. In Homo sapiens (Human), this protein is RING finger protein unkempt homolog (UNK).